Here is a 134-residue protein sequence, read N- to C-terminus: Small ribosomal subunit protein bS16 (134 aa).

The tract at residues Ala79–Glu134 is disordered. Low complexity predominate over residues Ala115–Glu134.

Belongs to the bacterial ribosomal protein bS16 family.

This chain is Small ribosomal subunit protein bS16, found in Brucella canis (strain ATCC 23365 / NCTC 10854 / RM-666).